The following is a 354-amino-acid chain: NADH-quinone oxidoreductase subunit H (354 aa).

A run of 8 helical transmembrane segments spans residues 16 to 36 (WLAVLITLVLQAVAVILPVMI), 90 to 110 (YLFIIAPILALAPAVAAWAVI), 126 to 146 (VLYVLAVASIGVYGIVISGWA), 170 to 190 (MGFALVTVLMVADTMNLTGIV), 197 to 217 (IWNWYWIPLLPMFFVYFISGL), 249 to 269 (VFFLAEYAMMILISFMTAIMF), 290 to 310 (VPGFVWLFAKVAFLLFLFLWF), and 329 to 349 (VLIPVTIVWVFVVGVMEYFKV).

It belongs to the complex I subunit 1 family. In terms of assembly, NDH-1 is composed of 14 different subunits. Subunits NuoA, H, J, K, L, M, N constitute the membrane sector of the complex.

It is found in the cell inner membrane. It catalyses the reaction a quinone + NADH + 5 H(+)(in) = a quinol + NAD(+) + 4 H(+)(out). Its function is as follows. NDH-1 shuttles electrons from NADH, via FMN and iron-sulfur (Fe-S) centers, to quinones in the respiratory chain. The immediate electron acceptor for the enzyme in this species is believed to be ubiquinone. Couples the redox reaction to proton translocation (for every two electrons transferred, four hydrogen ions are translocated across the cytoplasmic membrane), and thus conserves the redox energy in a proton gradient. This subunit may bind ubiquinone. This Hydrogenovibrio crunogenus (strain DSM 25203 / XCL-2) (Thiomicrospira crunogena) protein is NADH-quinone oxidoreductase subunit H.